We begin with the raw amino-acid sequence, 501 residues long: Pyruvate kinase (501 aa).

Residue Arg50 coordinates substrate. 4 residues coordinate K(+): Asn52, Ser54, Asp85, and Thr86. 52-55 (NFSH) is an ATP binding site. The ATP site is built by Arg92 and Lys178. Glu243 contacts Mg(2+). Substrate-binding residues include Gly266, Asp267, and Thr299. Mg(2+) is bound at residue Asp267.

Belongs to the pyruvate kinase family. Homotetramer. The cofactor is Mg(2+). K(+) serves as cofactor.

It carries out the reaction pyruvate + ATP = phosphoenolpyruvate + ADP + H(+). Its pathway is carbohydrate degradation; glycolysis; pyruvate from D-glyceraldehyde 3-phosphate: step 5/5. This chain is Pyruvate kinase (PYK1), found in Naumovozyma castellii (Yeast).